We begin with the raw amino-acid sequence, 384 residues long: Transcription factor TGA3 (384 aa).

2 disordered regions span residues 36–70 and 76–95; these read KSDI…NNRV and YNNS…EDRI. Positions 39–55 are enriched in low complexity; it reads INNITSNQNNNQSSSTT. Over residues 58-68 the composition is skewed to basic and acidic residues; the sequence is VDARPEADDNN. Residues 76-88 show a composition bias toward polar residues; that stretch reads YNNSLEAEPSSNN. Residues 96 to 138 form the bZIP domain; it reads NDKMKRRLAQNREAARKSRLRKKAHVQQLEESRLKLSQLEQEL. The tract at residues 98 to 118 is basic motif; sequence KMKRRLAQNREAARKSRLRKK. The short motif at 99-106 is the Nuclear localization signal element; it reads MKRRLAQN. Residues 117 to 144 are a coiled coil; it reads KKAHVQQLEESRLKLSQLEQELVRARQQ. Residues 124-138 form a leucine-zipper region; that stretch reads LEESRLKLSQLEQEL. In terms of domain architecture, DOG1 spans 167–379; it reads IAAFEMEYTH…RALSSLWAAR (213 aa). Positions 219, 236, and 249 each coordinate hexadecanoate. Residues 267–296 are a coiled coil; sequence DQQLLEVRNLQQSSQQAEEALSQGLDKLQQ.

The protein belongs to the bZIP family. Binds DNA as a dimer. Interacts with NPR3, NPR4 and sumoylated NPR1. Interacts with GRXC7/ROXY1. Expressed in the whole plant.

Its subcellular location is the nucleus. Functionally, transcriptional activator that binds specifically to the DNA sequence 5'-TGACG-3'. Recognizes ocs elements like the as-1 motif of the cauliflower mosaic virus 35S promoter. Binding to the as-1-like cis elements mediate auxin- and salicylic acid-inducible transcription. Required to induce the systemic acquired resistance (SAR) via the regulation of pathogenesis-related genes expression. Binding to the as-1 element of PR-1 promoter is salicylic acid-inducible and mediated by sumoylated NPR1. Could also bind to the Hex-motif (5'-TGACGTGG-3') another cis-acting element found in plant histone promoters. This chain is Transcription factor TGA3, found in Arabidopsis thaliana (Mouse-ear cress).